Consider the following 450-residue polypeptide: Exodeoxyribonuclease 7 large subunit (450 aa).

Belongs to the XseA family. In terms of assembly, heterooligomer composed of large and small subunits.

The protein resides in the cytoplasm. It catalyses the reaction Exonucleolytic cleavage in either 5'- to 3'- or 3'- to 5'-direction to yield nucleoside 5'-phosphates.. Bidirectionally degrades single-stranded DNA into large acid-insoluble oligonucleotides, which are then degraded further into small acid-soluble oligonucleotides. This chain is Exodeoxyribonuclease 7 large subunit, found in Shewanella frigidimarina (strain NCIMB 400).